A 258-amino-acid polypeptide reads, in one-letter code: MISLRFQPSTTAGVLSASVSRAGFIKRCGSTKPGRVGRFVTMATAASPLEICVKASITTPNKLGDCPFCQKVLLTMEEKNVPYDMKMVDLSNKPEWFLKISPEGKVPVVKFDEKWVPDSDVITQALEEKYPEPPLATPPEKASVGSKIFSTFVGFLKSKDSGDGTEQVLLDELTTFNDYIKDNGPFINGEKISAADLSLAPKLYHMKIALGHYKNWSVPDSLPFVKSYMENVFSRESFTNTRAETEDVIAGWRPKVMG.

A chloroplast-targeting transit peptide spans 1–42 (MISLRFQPSTTAGVLSASVSRAGFIKRCGSTKPGRVGRFVTM). Position 52 is an S-glutathionyl cysteine (Cys-52). Residues Lys-54 and Asp-65 each contribute to the glutathione site. The L-ascorbate site is built by Lys-54 and Asp-65. Positions 56 to 129 (SITTPNKLGD…DVITQALEEK (74 aa)) constitute a GST N-terminal domain. Cys-66 serves as the catalytic Nucleophile. Residues Cys-66 and Cys-69 are joined by a disulfide bond. A Glutathione-binding motif is present at residues 66–71 (CPFCQK). 5 residues coordinate glutathione: Lys-93, Val-106, Ser-119, His-205, and Trp-252. Residues 130–258 (YPEPPLATPP…IAGWRPKVMG (129 aa)) form the GST C-terminal domain. Lys-255 contacts L-ascorbate.

This sequence belongs to the GST superfamily. DHAR family. In terms of assembly, monomer. Interacts with TRX3. Partial S-glutathionylation and intramolecular disulfide bond formation between Cys-66 and Cys-69 in the presence of oxidized glutathione (GSSG). Could be reduced by TRX-dependent process.

It localises to the plastid. The protein resides in the chloroplast stroma. It catalyses the reaction RX + glutathione = an S-substituted glutathione + a halide anion + H(+). The enzyme catalyses L-dehydroascorbate + 2 glutathione = glutathione disulfide + L-ascorbate. Its function is as follows. Displays a dual function. As a soluble protein, exhibits glutathione-dependent thiol transferase and dehydroascorbate (DHA) reductase activities. Key component of the ascorbate recycling system. Involved in the redox homeostasis, especially in scavenging of ROS under oxidative stresses. The protein is Glutathione S-transferase DHAR3, chloroplastic (DHAR3) of Arabidopsis thaliana (Mouse-ear cress).